The following is a 318-amino-acid chain: MFMINILMLIIPILLAGAFLTLVERKVLGYMQLRKGPNVVGPYGLLQPIADAIKLFIKEPLRPATSSTSMFILAPILALGLALTMWIPLPMPHPLINMNLGVLFMLAMSSLAVYSILWSGWASNSKYALIGALRAVAQTISYEVTLAIILLSVLLMSGSFTLSTLIITQEQTWLILPAWPLAMMWFISTLAETNRAPFDLTEGESELVSGFNVEYAAGPFALFFMAEYANIIMMNMFTAILFLGTSHNPHMPELYTINFIIKSLLLTMLFLWIRASYPRFRYDQLMHLLWKNFLPLTLALCMWHVSLPILTSGIPPQT.

8 helical membrane passes run 2-22, 70-90, 100-120, 147-167, 172-192, 222-242, 253-273, and 294-314; these read FMIN…FLTL, MFIL…IPLP, LGVL…LWSG, AIIL…TLII, TWLI…TLAE, LFFM…AILF, ELYT…FLWI, and LPLT…TSGI.

This sequence belongs to the complex I subunit 1 family. Core subunit of respiratory chain NADH dehydrogenase (Complex I) which is composed of 45 different subunits.

It is found in the mitochondrion inner membrane. The catalysed reaction is a ubiquinone + NADH + 5 H(+)(in) = a ubiquinol + NAD(+) + 4 H(+)(out). In terms of biological role, core subunit of the mitochondrial membrane respiratory chain NADH dehydrogenase (Complex I) which catalyzes electron transfer from NADH through the respiratory chain, using ubiquinone as an electron acceptor. Essential for the catalytic activity and assembly of complex I. The sequence is that of NADH-ubiquinone oxidoreductase chain 1 (MT-ND1) from Bos mutus grunniens (Wild yak).